We begin with the raw amino-acid sequence, 224 residues long: MSLMNLPEESRPREKLLALGPKSLTDAELLAIFLRTGTQGMNAIELADKLLKEFGSLRKLLSSDENEFCSHKGLGTAKFAQLQAVVEMTERYLFEKIEKEDALTSPEHTKRYLTRMLRDRHREAFYVLFLDNQHRVLKGEILFEGTIDVAAVYPREVVKRSIDYNAAAIILAHNHPSGVAEPSQADRRITKRISDAVELVDIRVLDHFVIGDGEIVSFAERGWI.

Residues 102 to 224 (ALTSPEHTKR…IVSFAERGWI (123 aa)) form the MPN domain. Histidine 173, histidine 175, and aspartate 186 together coordinate Zn(2+). The JAMM motif motif lies at 173–186 (HNHPSGVAEPSQAD).

It belongs to the UPF0758 family.

This chain is UPF0758 protein VF_0126, found in Aliivibrio fischeri (strain ATCC 700601 / ES114) (Vibrio fischeri).